A 126-amino-acid chain; its full sequence is Ribosome-binding factor A (126 aa).

This sequence belongs to the RbfA family. Monomer. Binds 30S ribosomal subunits, but not 50S ribosomal subunits or 70S ribosomes.

The protein localises to the cytoplasm. One of several proteins that assist in the late maturation steps of the functional core of the 30S ribosomal subunit. Associates with free 30S ribosomal subunits (but not with 30S subunits that are part of 70S ribosomes or polysomes). Required for efficient processing of 16S rRNA. May interact with the 5'-terminal helix region of 16S rRNA. In Thermosynechococcus vestitus (strain NIES-2133 / IAM M-273 / BP-1), this protein is Ribosome-binding factor A.